The chain runs to 124 residues: Small polypeptide ROTUNDIFOLIA LIKE 3 (124 aa).

The segment at 1–25 is disordered; sequence MEDERWKLSSSKGRSKSGRSCSSSS. Residues Asn35 and Asn38 are each glycosylated (N-linked (GlcNAc...) asparagine). Residues 59 to 75 form a helical membrane-spanning segment; the sequence is AWSAAGAGGGGASSSSS. Residues 60–95 are disordered; the sequence is WSAAGAGGGGASSSSSSQHQHQQQQQQSNNSQRLSK. A compositionally biased stretch (low complexity) spans 71–91; the sequence is SSSSSSQHQHQQQQQQSNNSQ. Residue Asn88 is glycosylated (N-linked (GlcNAc...) asparagine). The required for DVL/RTFL small polypeptide activity stretch occupies residues 92–124; it reads RLSKKCVEAVKEHRARFYIVRRCVSMLVCWRDY.

Belongs to the DVL/RTFL small polypeptides family.

It localises to the cell membrane. Functionally, small polypeptide acting as a regulatory molecule which coordinates cellular responses required for differentiation, growth and development, probably by restricting polar cell proliferation in lateral organs (e.g. leaves and petioles). This is Small polypeptide ROTUNDIFOLIA LIKE 3 from Oryza sativa subsp. indica (Rice).